The sequence spans 5206 residues: Multifunctional-autoprocessing repeats-in-toxin (5206 aa).

The N-terminal stretch at 1 to 19 is a signal peptide; sequence MGKPFWRSVEYFFTGNYSA. RtxA repeat units lie at residues 101 to 118, 121 to 138, 141 to 157, 161 to 184, 187 to 204, 207 to 224, 255 to 272, 275 to 291, 584 to 601, 604 to 620, 624 to 641, 644 to 658, 741 to 753, 759 to 771, 782 to 798, 801 to 816, 820 to 835, 841 to 855, 858 to 875, 877 to 891, 896 to 910, 915 to 932, 934 to 950, 972 to 984, 991 to 1006, 1031 to 1043, 1067 to 1079, 1087 to 1102, 1110 to 1122, 1125 to 1142, 1145 to 1159, 1163 to 1179, 1184 to 1199, 1201 to 1217, 1220 to 1236, 1242 to 1256, 1258 to 1275, 1296 to 1313, and 1315 to 1332; these read GAAG…GDVS, GAAA…GNVT, GAGG…QGNL, GAGA…GDVT, GAGA…GNIT, GAGA…GDIT, GVGG…GDIH, GGGA…GSSF, GAGG…GNVY, GGGI…FGNT, GGGA…GDLT, GAGL…SKQG, AGGA…VGDG, MLGG…HISG, ALGG…GNTL, MGGG…DGTT, MVGG…NGDT, GVGN…GQTL, MGAA…TSIA, MIGA…GEGN, MGGL…GNGD, MVAE…MSVA, MLAK…GTTL, MIGQ…KVGN, MVGK…DGTS, GKAN…GDGL, AAAK…HVGD, AGKG…GTTV, GNVM…GTTI, AKGK…LGVN, WGQA…DGDR, AKGE…GKEV, GKAN…DDYT, AWGK…GRNV, AKGE…GDSF, KGNI…MQVT, AKGK…LSVT, AWGK…LNVA, and MKGK…LNIN. The span at 1606–1626 shows a compositional bias: polar residues; sequence SQQANAVSEHATQNQASQNAL. Disordered regions lie at residues 1606-1682 and 1738-1895; these read SQQA…ESEA and IAAA…EQEA. A compositionally biased stretch (basic and acidic residues) spans 1627–1646; sequence SDKERAEADRQRLEQEKQKQ. Over residues 1652 to 1671 the composition is skewed to polar residues; it reads GSQSQLESTDQQALGNNGQA. Over residues 1778–1805 the composition is skewed to basic and acidic residues; that stretch reads AEAKADAETRKADAVAKSNDAKQAESDA. The span at 1825–1834 shows a compositional bias: polar residues; it reads NKANQAQNDA. The span at 1835-1849 shows a compositional bias: basic and acidic residues; the sequence is KGTKQNEGDRPDREG. Polar residues predominate over residues 1870 to 1880; sequence SHITTDSQTNA. The segment at 2377–2461 is membrane localization region (MLD); sequence ELMSVTELLD…SLLNQVNSRL (85 aa). Residues 2537–2901 form a rho inactivation domain (RID) region; the sequence is EYGQVVADTI…HQVTDVLDAL (365 aa). The tract at residues 2998-3113 is ABH effector region; it reads VVLFLHGSGS…MPSMTKAITA (116 aa). The Peptidase C80 domain maps to 4111-4295; the sequence is PTADGGESRF…AENNKVSLSW (185 aa). Residues 4117–4119, 4144–4145, and R4175 each bind 1D-myo-inositol hexakisphosphate; these read ESR and KH. Residue H4181 is the For cysteine protease activity of the active site. S4226 contributes to the 1D-myo-inositol hexakisphosphate binding site. C4230 (nucleophile; for cysteine protease activity) is an active-site residue. 1D-myo-inositol hexakisphosphate-binding positions include 4259 to 4261, 4272 to 4273, K4285, and K4290; these read SVR and RK. Disordered stretches follow at residues 4333–4362 and 4738–4779; these read GAIG…ANNK and LKEK…ETPD. Residues 4750 to 4762 are compositionally biased toward low complexity; the sequence is SSVSVNGASVNSA.

Requires Mg(2+) as cofactor.

The protein resides in the secreted. It is found in the host cytoplasm. It localises to the host cytosol. Its subcellular location is the host cell membrane. It carries out the reaction L-lysyl-/S-(2E,6E,10E)-geranylgeranyl-L-cysteinyl-[protein] + hexadecanoyl-CoA = N(6)-hexadecanoyl-L-lysyl-/S-(2E,6E,10E)-geranylgeranyl-L-cysteinyl-[protein] + CoA + H(+). The catalysed reaction is L-lysyl-/S-(2E,6E,10E)-geranylgeranyl-L-cysteinyl-[protein] + dodecanoyl-CoA = N(6)-dodecanoyl-L-lysyl-/S-(2E,6E,10E)-geranylgeranyl-L-cysteinyl-[protein] + CoA + H(+). It catalyses the reaction L-lysyl-/S-(2E,6E,10E)-geranylgeranyl-L-cysteinyl-[protein] + decanoyl-CoA = N(6)-decanoyl-L-lysyl-/S-(2E,6E,10E)-geranylgeranyl-L-cysteinyl-[protein] + CoA + H(+). Functionally, precursor of a multifunctional toxin that causes destruction of the actin cytoskeleton by covalent cross-linking of actin and inactivation of Rho GTPases when translocated into the host cytoplasm. Upon translocation into the host cell, undergoes autoprocessing in cis mediated by the peptidase C80 domain (also named CPD domain): the protease activity is activated upon binding inositol hexakisphosphate (InsP6) present at the host cell membrane and delivers the Cysteine protease domain-containing toxin F3 chain to the host cytosol. The Cysteine protease domain-containing toxin F3 chain will then further cleave and release effector toxin chains that cause disassembly of the actin cytoskeleton and enhance V.vulnificus colonization of the small intestine, possibly by facilitating evasion of phagocytic cells. In terms of biological role, following autocatalytic cleavage in cis, this chain mediates processing in trans to release other individual toxin chains to the host cytosol. Released effector toxin chains cause disassembly of the actin cytoskeleton and enhance V.vulnificus colonization of the small intestine, possibly by facilitating evasion of phagocytic cells. Its function is as follows. Actin-directed toxin that catalyzes the covalent cross-linking of host cytoplasmic monomeric actin. Mediates the cross-link between 'Lys-50' of one monomer and 'Glu-270' of another actin monomer, resulting in formation of highly toxic actin oligomers that cause cell rounding. The toxin can be highly efficient at very low concentrations by acting on formin homology family proteins: toxic actin oligomers bind with high affinity to formins and adversely affect both nucleation and elongation abilities of formins, causing their potent inhibition in both profilin-dependent and independent manners. Acts as an acid--amino-acid ligase that transfers the gamma-phosphoryl group of ATP to the 'Glu-270' actin residue, resulting in the formation of an activated acyl phosphate intermediate. This intermediate is further hydrolyzed and the energy of hydrolysis is utilized for the formation of the amide bond between actin subunits. N-epsilon-fatty acyltransferase that mediates lysine-palmitoylation of host Rho GTPase proteins, with a strong preference for host Rac1. After delivery to the host cytosol, localizes to the host cell membrane where it palmitoylates host Rho GTPase proteins, resulting in loss of all active GTP-bound Rho and subsequent actin depolymerization. Prenylation of host Rac1 at the C-terminus is required for lysine-palmitoylation. Functionally, indirectly activates the small GTPase CDC42. The polypeptide is Multifunctional-autoprocessing repeats-in-toxin (Vibrio vulnificus).